Reading from the N-terminus, the 92-residue chain is MQERINRRKALTGVVVSDKSSKTIVVAVDTFKKDPLYQKRFKSTKKFAAHDEKEEAQMGDIVKIVGTRPLSKTKFFRLEKIRQRAKEGKGSE.

It belongs to the universal ribosomal protein uS17 family. As to quaternary structure, part of the 30S ribosomal subunit.

Its function is as follows. One of the primary rRNA binding proteins, it binds specifically to the 5'-end of 16S ribosomal RNA. The chain is Small ribosomal subunit protein uS17 from Mycoplasma mobile (strain ATCC 43663 / 163K / NCTC 11711) (Mesomycoplasma mobile).